The chain runs to 124 residues: Fluoride-specific ion channel FluC (124 aa).

4 consecutive transmembrane segments (helical) span residues Ile-4–Trp-24, Gly-32–Met-52, Ile-67–Thr-87, and Phe-96–Leu-116. Residues Gly-75 and Thr-78 each contribute to the Na(+) site.

This sequence belongs to the fluoride channel Fluc/FEX (TC 1.A.43) family.

It localises to the cell inner membrane. It catalyses the reaction fluoride(in) = fluoride(out). With respect to regulation, na(+) is not transported, but it plays an essential structural role and its presence is essential for fluoride channel function. In terms of biological role, fluoride-specific ion channel. Important for reducing fluoride concentration in the cell, thus reducing its toxicity. This chain is Fluoride-specific ion channel FluC, found in Geobacter metallireducens (strain ATCC 53774 / DSM 7210 / GS-15).